Consider the following 885-residue polypeptide: Leucine--tRNA ligase (885 aa).

Residues 48-58 (PYPSGKLHMGH) carry the 'HIGH' region motif. Positions 639–643 (TMSKS) match the 'KMSKS' region motif. Residue K642 coordinates ATP.

Belongs to the class-I aminoacyl-tRNA synthetase family.

The protein resides in the cytoplasm. The catalysed reaction is tRNA(Leu) + L-leucine + ATP = L-leucyl-tRNA(Leu) + AMP + diphosphate. The sequence is that of Leucine--tRNA ligase from Bordetella petrii (strain ATCC BAA-461 / DSM 12804 / CCUG 43448).